A 517-amino-acid chain; its full sequence is Protein translocase subunit SecD (517 aa).

6 consecutive transmembrane segments (helical) span residues 5–25, 357–377, 380–400, 407–427, 455–475, and 479–499; these read LRWITILIVFVVSLFFMFPLD, IWAGIIGVAAVIIFMLIYYKF, FIASIALLSNAIIILGAMGMF, PGIAGLILTMGMAIDANVLIF, IIDSNITTLIAGLVLFQFGTG, and GFAVTLTIGILSSIFTAVTLS.

Belongs to the SecD/SecF family. SecD subfamily. As to quaternary structure, forms a complex with SecF. Part of the essential Sec protein translocation apparatus which comprises SecA, SecYEG and auxiliary proteins SecDF. Other proteins may also be involved.

It localises to the cell inner membrane. Part of the Sec protein translocase complex. Interacts with the SecYEG preprotein conducting channel. SecDF uses the proton motive force (PMF) to complete protein translocation after the ATP-dependent function of SecA. The protein is Protein translocase subunit SecD of Calditerrivibrio nitroreducens (strain DSM 19672 / NBRC 101217 / Yu37-1).